Here is a 397-residue protein sequence, read N- to C-terminus: L-aspartate--L-methionine ligase (397 aa).

The region spanning 131-347 is the ATP-grasp domain; sequence VALNNKARIP…FFNTILKYVK (217 aa). Positions 136, 171, 173, 183, 186, 188, 215, 216, 218, 223, and 246 each coordinate ADP. Asp288 contributes to the Mg(2+) binding site. ADP is bound by residues Leu290 and Ile300. Position 301 (Asp301) interacts with Mg(2+). The Critical for catalysis role is filled by Arg305.

As to quaternary structure, primarily a monomer in solution. Minor homodimer formation. Mg(2+) serves as cofactor.

The catalysed reaction is L-aspartate + L-methionine + ATP = L-aspartyl-L-methionine + ADP + phosphate + H(+). Its pathway is amino-acid metabolism. In terms of biological role, L-amino acid ligase, which preferentially catalyzes the formation of L-aspartyl-L-methionine dipeptide from L-aspartate and L-methionine in the presence of ATP. Less active with L-asparagine and L-methionine as substrates. Less active with L-aspartate and either L-phenylalanine, L-valine, L-leucine or L-isoleucine as substrates. Decreased activity when L-methionine is substituted with seleno-DL-methionine, L-homocysteine, L-methionine sulfoxide, L-methionine sulfoximine and o-acetyl-L-serine. Decreased activity with acetylation of L-methionine amino group. Decreased activity by modification of L-methionine carboxylate to L-methionine methyl ester. No activity when L-methionine is substituted with L-homoserine. No activity with formylation of L-methionine amino group. No activity by modification of L-methionine carboxylate to L-methionine-glycine carboxylate. No activity when L-aspartate substrate is replaced by analogs such as L-homoserine, DL-aspartate beta-methyl ester, L-glutamate or o-acetyl-L-serine. No activity when L-aspartate amino and alpha-carboxylate groups are modified to L-malate, glycine-L-aspartate, L-aspartate-glycine or N-carbamoyl-DL-aspartate. No activity with L-methionine or L-aspartate as sole substrates. No activity in presence of other nucleoside triphosphates including GTP, CTP, UTP, TTP or ITP. Involved in sulfur amino acid metabolism. The chain is L-aspartate--L-methionine ligase from Staphylococcus aureus (strain NCTC 8325 / PS 47).